The primary structure comprises 311 residues: Methionyl-tRNA formyltransferase (311 aa).

Position 109 to 112 (109 to 112 (SLLP)) interacts with (6S)-5,6,7,8-tetrahydrofolate.

The protein belongs to the Fmt family.

It carries out the reaction L-methionyl-tRNA(fMet) + (6R)-10-formyltetrahydrofolate = N-formyl-L-methionyl-tRNA(fMet) + (6S)-5,6,7,8-tetrahydrofolate + H(+). Functionally, attaches a formyl group to the free amino group of methionyl-tRNA(fMet). The formyl group appears to play a dual role in the initiator identity of N-formylmethionyl-tRNA by promoting its recognition by IF2 and preventing the misappropriation of this tRNA by the elongation apparatus. The sequence is that of Methionyl-tRNA formyltransferase from Staphylococcus aureus (strain JH1).